The chain runs to 160 residues: uncharacterized protein (160 aa).

The chain crosses the membrane as a helical span at residues 1–21; it reads MSIQTLIIISIVIFILWLTFT.

This sequence belongs to the IIV-6 203L/325L family.

The protein localises to the membrane. This is an uncharacterized protein from Invertebrate iridescent virus 6 (IIV-6).